Consider the following 382-residue polypeptide: Succinate--CoA ligase [ADP-forming] subunit beta 1 (382 aa).

An ATP-grasp domain is found at 9 to 235 (KQIFAKHGIR…ATEEDPLERE (227 aa)). Residues K45, 52–54 (GRG), E91, L94, and E99 each bind ATP. Positions 191 and 204 each coordinate Mg(2+). N255 is a binding site for substrate.

Belongs to the succinate/malate CoA ligase beta subunit family. Heterotetramer of two alpha and two beta subunits. Requires Mg(2+) as cofactor.

It catalyses the reaction succinate + ATP + CoA = succinyl-CoA + ADP + phosphate. The catalysed reaction is GTP + succinate + CoA = succinyl-CoA + GDP + phosphate. It functions in the pathway carbohydrate metabolism; tricarboxylic acid cycle; succinate from succinyl-CoA (ligase route): step 1/1. Functionally, succinyl-CoA synthetase functions in the citric acid cycle (TCA), coupling the hydrolysis of succinyl-CoA to the synthesis of either ATP or GTP and thus represents the only step of substrate-level phosphorylation in the TCA. The beta subunit provides nucleotide specificity of the enzyme and binds the substrate succinate, while the binding sites for coenzyme A and phosphate are found in the alpha subunit. The polypeptide is Succinate--CoA ligase [ADP-forming] subunit beta 1 (Archaeoglobus fulgidus (strain ATCC 49558 / DSM 4304 / JCM 9628 / NBRC 100126 / VC-16)).